The primary structure comprises 2253 residues: Genome polyprotein (2253 aa).

An intrachain disulfide couples Cys627 to Cys694. Positions 750 to 752 match the Cell attachment site motif; the sequence is RVD. The region spanning 825 to 920 is the LRAT domain; sequence LVYKNRGFYK…LFPGRKEITQ (96 aa). Catalysis depends on for protein 2A H-NC residues His835 and His846. Cys904 serves as the catalytic For protein 2A H-NC; Acyl-thioester intermediate. The chain crosses the membrane as a helical span at residues 1002 to 1022; that stretch reads IVLYCHAPNMLTTMCLGTLLV. Residues 1205–1366 enclose the SF3 helicase domain; it reads YSEMMRVNVR…ASYSRNNKLD (162 aa). Tyr1559 is modified (O-(5'-phospho-RNA)-tyrosine). Residues 1586 to 1775 enclose the Peptidase C3 domain; that stretch reads APYMQDLEHC…RAAAVHFISN (190 aa). Active-site for protease 3C activity residues include His1626, Asp1664, and Cys1739. Cys1970 serves as the catalytic Acyl-thioester intermediate. The 115-residue stretch at 2018 to 2132 folds into the RdRp catalytic domain; sequence PYNYGLDYSS…SVSSPLDAEY (115 aa). Residues Asp2024 and Asp2118 each contribute to the Mg(2+) site.

This sequence belongs to the picornaviruses polyprotein family. In terms of assembly, interacts with capsid protein VP1 and capsid protein VP3 to form heterotrimeric protomers. Five protomers subsequently associate to form pentamers which serve as building blocks for the capsid. As to quaternary structure, interacts with capsid protein VP0, and capsid protein VP3 to form heterotrimeric protomers. Five protomers subsequently associate to form pentamers which serve as building blocks for the capsid. Interacts with capsid protein VP0 and capsid protein VP1 to form heterotrimeric protomers. Five protomers subsequently associate to form pentamers which serve as building blocks for the capsid. In terms of assembly, homohexamer; forms a hexameric ring structure with 6-fold symmetry characteristic of AAA+ ATPases. As to quaternary structure, homodimer. Interacts with host ACBD3. Interacts with RNA-directed RNA polymerase. In terms of assembly, interacts with Viral protein genome-linked. Mg(2+) is required as a cofactor. VPg is uridylylated by the polymerase and is covalently linked to the 5'-end of genomic RNA. This uridylylated form acts as a nucleotide-peptide primer for the polymerase. In terms of processing, specific enzymatic cleavages yield mature proteins. All cleavages are catalyzed by P3C.

The protein resides in the virion. The protein localises to the host cytoplasm. Its subcellular location is the host nucleus. It is found in the host nucleolus. It localises to the host cytoplasmic vesicle membrane. The protein resides in the host endoplasmic reticulum membrane. The protein localises to the host Golgi apparatus membrane. It catalyses the reaction RNA(n) + a ribonucleoside 5'-triphosphate = RNA(n+1) + diphosphate. The enzyme catalyses a ribonucleoside 5'-triphosphate + H2O = a ribonucleoside 5'-diphosphate + phosphate + H(+). It carries out the reaction Selective cleavage of Gln-|-Gly bond in the poliovirus polyprotein. In other picornavirus reactions Glu may be substituted for Gln, and Ser or Thr for Gly.. Its function is as follows. Forms an icosahedral capsid of pseudo T=3 symmetry together with capsid proteins VP1 and VP3. The capsid is 300 Angstroms in diameter, composed of 60 copies of each capsid protein and enclosing the viral positive strand RNA genome. The attachment to the host cell receptor induces virion internalization predominantly through clathrin-mediated endocytosis. Binds packaging signals present in the viral RNA. In terms of biological role, forms an icosahedral capsid of pseudo T=3 symmetry together with capsid proteins VP0 and VP1. The capsid is 300 Angstroms in diameter, composed of 60 copies of each capsid protein and enclosing the viral positive strand RNA genome. The attachment to the host cell receptor induces virion internalization predominantly through clathrin-mediated endocytosis. Binds packaging signals present in the viral RNA. Forms an icosahedral capsid of pseudo T=3 symmetry together with capsid proteins VP0 and VP3. The capsid is 300 Angstroms in diameter, composed of 60 copies of each capsid protein and enclosing the viral positive strand RNA genome. The attachment to the host cell receptor induces virion internalization predominantly through clathrin-mediated endocytosis. Binds packaging signals present in the viral RNA. Functionally, mediates self-processing of the polyprotein by a translational effect termed 'ribosome skipping'. Mechanistically, 2A1-mediated cleavage occurs between the C-terminal glycine and the proline of the downstream protein 2A2. Its function is as follows. Plays an essential role in the virus replication cycle by acting as a viroporin. Creates a pore in the host endoplasmic reticulum and as a consequence releases Ca2+ in the cytoplasm of infected cell. In turn, high levels of cytoplasmic calcium may trigger membrane trafficking and transport of viral ER-associated proteins to viroplasms, sites of viral genome replication. In terms of biological role, induces and associates with structural rearrangements of intracellular membranes. Displays RNA-binding, nucleotide binding and NTPase activities. May play a role in virion morphogenesis and viral RNA encapsidation by interacting with the capsid protein VP3. Localizes the viral replication complex to the surface of membranous vesicles. It inhibits host cell endoplasmic reticulum-to-Golgi apparatus transport and causes the disassembly of the Golgi complex, possibly through GBF1 interaction. This would result in depletion of MHC, trail receptors and IFN receptors at the host cell surface. Plays an essential role in viral RNA replication by recruiting ACBD3 and PI4KB at the viral replication sites, thereby allowing the formation of the rearranged membranous structures where viral replication takes place. Functionally, acts as a primer for viral RNA replication and remains covalently bound to viral genomic RNA. VPg is uridylylated prior to priming replication into VPg-pUpU. The VPg-pUpU is then used as primer on the genomic RNA poly(A) by the RNA-dependent RNA polymerase to replicate the viral genome. Following genome release from the infecting virion in the cytoplasm, the VPg-RNA linkage is probably removed by host TDP2. During the late stage of the replication cycle, host TDP2 is excluded from sites of viral RNA synthesis and encapsidation, allowing for the generation of progeny virions. Its function is as follows. Cysteine protease that generates mature viral proteins from the precursor polyprotein. In addition to its proteolytic activity, it binds to viral RNA, and thus influences viral genome replication. RNA and substrate bind cooperatively to the protease. In terms of biological role, replicates the viral genomic RNA on the surface of intracellular membranes. Covalently attaches UMP to a tyrosine of VPg, which is used to prime RNA synthesis. The positive stranded RNA genome is first replicated at virus induced membranous vesicles, creating a dsRNA genomic replication form. This dsRNA is then used as template to synthesize positive stranded RNA genomes. ss(+)RNA genomes are either translated, replicated or encapsidated. The chain is Genome polyprotein from Ljunganvirus 1 (LV).